Here is a 625-residue protein sequence, read N- to C-terminus: Glutamine--fructose-6-phosphate aminotransferase [isomerizing] (625 aa).

Residue Cys2 is the Nucleophile; for GATase activity of the active site. In terms of domain architecture, Glutamine amidotransferase type-2 spans 2–229 (CGLVGYVGQR…QDQAVVITAD (228 aa)). SIS domains are found at residues 298–437 (SDQE…ARGT) and 470–615 (LAYR…VDKP). Lys620 acts as the For Fru-6P isomerization activity in catalysis.

In terms of assembly, homodimer.

Its subcellular location is the cytoplasm. It carries out the reaction D-fructose 6-phosphate + L-glutamine = D-glucosamine 6-phosphate + L-glutamate. Functionally, catalyzes the first step in hexosamine metabolism, converting fructose-6P into glucosamine-6P using glutamine as a nitrogen source. This is Glutamine--fructose-6-phosphate aminotransferase [isomerizing] from Mycobacterium leprae (strain TN).